The chain runs to 439 residues: Serine/threonine-protein kinase 2 (439 aa).

The Protein kinase domain maps to 87 to 439 (NDDFYHISTG…IFSDWINGRN (353 aa)). Residues 93 to 101 (ISTGGYGIV) and Lys-117 contribute to the ATP site. Asp-307 (proton acceptor) is an active-site residue.

It belongs to the protein kinase superfamily. Ser/Thr protein kinase family. Phosphorylated in vivo. Autophosphorylated in vitro.

The protein localises to the host endoplasmic reticulum. It is found in the host endoplasmic reticulum-Golgi intermediate compartment. It catalyses the reaction L-seryl-[protein] + ATP = O-phospho-L-seryl-[protein] + ADP + H(+). The catalysed reaction is L-threonyl-[protein] + ATP = O-phospho-L-threonyl-[protein] + ADP + H(+). In terms of biological role, essential serine-protein kinase involved in the early stage of virion morphogenesis. In Monkeypox virus, this protein is Serine/threonine-protein kinase 2 (OPG054).